Here is a 133-residue protein sequence, read N- to C-terminus: uncharacterized protein (133 aa).

Residues 44–79 (VENQLASSKTEEQTLKISKKSNLNPAQKSSTFGLEN) form a disordered region. Polar residues predominate over residues 63-79 (KSNLNPAQKSSTFGLEN).

The protein localises to the plastid. It localises to the chloroplast. This is an uncharacterized protein from Chlorella vulgaris (Green alga).